The sequence spans 179 residues: Signal peptidase complex subunit 2 (179 aa).

Residues 1-48 lie on the Cytoplasmic side of the membrane; the sequence is MSGNNVQEEDSTFHVSNLYSETEIKKITQDFISEKIREQNFEEIVKYS. A helical membrane pass occupies residues 49-69; the sequence is NIRIFLSLVLIVIGTYCSIFV. Residues 70–74 are Extracellular-facing; the sequence is QYKKN. A helical membrane pass occupies residues 75–95; that stretch reads PVIMIQLLVAFFVVSTTLIIF. Residues 96–179 are Cytoplasmic-facing; it reads EYFFFDDVFM…AHGRTLKLKN (84 aa).

It belongs to the SPCS2 family. As to quaternary structure, component of the signal peptidase complex (SPC) composed of a catalytic subunit SEC11/SPC21 and three accessory subunits SPC25, SPC3/SPC22, SPC1/SPC12. The complex induces a local thinning of the ER membrane which is used to measure the length of the signal peptide (SP) h-region of protein substrates. This ensures the selectivity of the complex towards h-regions shorter than 18-20 amino acids. Within the complex, interacts with SEC11/SPC21. Component of a complex composed of SPC25 and PMV; the interaction is mediated via the transmembrane domains. The complex interacts with the SEC61 channel-forming translocon complex and is involved in the recognition and import of PEXEL motif-containing proteins into the ER for subsequent export.

The protein localises to the endoplasmic reticulum membrane. Component of the signal peptidase complex (SPC) which catalyzes the cleavage of N-terminal signal sequences from nascent proteins as they are translocated into the lumen of the endoplasmic reticulum. Enhances the enzymatic activity of SPC and facilitates the interactions between different components of the translocation site. Also, regulatory component of the CSP25-plasmepsin PMV complex which cleaves the pentameric localization motif RxLxE/Q/D (termed Plasmodium export element (PEXEL)) located downstream of the N-terminal secretory signal sequence of several proteins. This is Signal peptidase complex subunit 2 from Plasmodium falciparum (isolate 3D7).